The sequence spans 158 residues: Transcription elongation factor GreA (158 aa).

Belongs to the GreA/GreB family.

Functionally, necessary for efficient RNA polymerase transcription elongation past template-encoded arresting sites. The arresting sites in DNA have the property of trapping a certain fraction of elongating RNA polymerases that pass through, resulting in locked ternary complexes. Cleavage of the nascent transcript by cleavage factors such as GreA or GreB allows the resumption of elongation from the new 3'terminus. GreA releases sequences of 2 to 3 nucleotides. This is Transcription elongation factor GreA from Zymomonas mobilis subsp. mobilis (strain ATCC 31821 / ZM4 / CP4).